Here is a 164-residue protein sequence, read N- to C-terminus: Cyanate hydratase (164 aa).

Catalysis depends on residues R104, E107, and S130.

Belongs to the cyanase family.

It catalyses the reaction cyanate + hydrogencarbonate + 3 H(+) = NH4(+) + 2 CO2. Functionally, catalyzes the reaction of cyanate with bicarbonate to produce ammonia and carbon dioxide. The sequence is that of Cyanate hydratase from Botryotinia fuckeliana (strain B05.10) (Noble rot fungus).